Reading from the N-terminus, the 520-residue chain is Leucine carboxyl methyltransferase 1 (520 aa).

2 disordered regions span residues 1 to 116 (MQRD…DDAV) and 142 to 174 (TQEF…SIRR). Residues 79-89 (PSLRLSLGLPR) are compositionally biased toward low complexity. 2 stretches are compositionally biased toward polar residues: residues 95–110 (HSGQ…STAR) and 142–151 (TQEFSSTLPS). S-adenosyl-L-methionine-binding positions include R185, G210, D237, 305–306 (DV), and E343.

This sequence belongs to the methyltransferase superfamily. LCMT family.

The catalysed reaction is [phosphatase 2A protein]-C-terminal L-leucine + S-adenosyl-L-methionine = [phosphatase 2A protein]-C-terminal L-leucine methyl ester + S-adenosyl-L-homocysteine. In terms of biological role, methylates the carboxyl group of the C-terminal leucine residue of protein phosphatase 2A catalytic subunits to form alpha-leucine ester residues. The protein is Leucine carboxyl methyltransferase 1 (PPM1) of Mycosarcoma maydis (Corn smut fungus).